A 357-amino-acid polypeptide reads, in one-letter code: S-adenosyl-L-methionine:benzoic acid/salicylic acid carboxyl methyltransferase 1 (357 aa).

Y18 contacts S-adenosyl-L-homocysteine. Residue Q25 coordinates benzoate. S-adenosyl-L-homocysteine-binding residues include C59, N64, D96, L97, S135, and F136. Residue W157 participates in benzoate binding. The Mg(2+) site is built by N168, D254, F256, and N257. Q260 contacts benzoate.

It belongs to the methyltransferase superfamily. Type-7 methyltransferase family. Predominantly expressed in petal limbs and tubes of corollas.

It carries out the reaction benzoate + S-adenosyl-L-methionine = methyl benzoate + S-adenosyl-L-homocysteine. It catalyses the reaction salicylate + S-adenosyl-L-methionine = methyl salicylate + S-adenosyl-L-homocysteine. It participates in aromatic compound metabolism. Its function is as follows. Converts benzoic acid into the volatile ester methyl benzoates. This scent, mostly produced in a rhythmical, diurnal manner, attracts the pollinators. The protein is S-adenosyl-L-methionine:benzoic acid/salicylic acid carboxyl methyltransferase 1 of Petunia hybrida (Petunia).